The sequence spans 147 residues: Putative 2'-deoxynucleoside 5'-phosphate N-hydrolase 1 (147 aa).

Substrate-binding positions include 10–16 (YFCGSIR), tyrosine 25, histidine 42, glutamate 90, and 114–116 (SAM).

It belongs to the 2'-deoxynucleoside 5'-phosphate N-hydrolase 1 family. In terms of assembly, monomer and homodimer.

Its subcellular location is the cytoplasm. The protein localises to the nucleus. It catalyses the reaction a pyrimidine 2'-deoxyribonucleoside 5'-phosphate + H2O = a pyrimidine nucleobase + 2-deoxy-D-ribose 5-phosphate. It carries out the reaction a purine 2'-deoxyribonucleoside 5'-phosphate + H2O = a purine nucleobase + 2-deoxy-D-ribose 5-phosphate. Functionally, catalyzes the cleavage of the N-glycosidic bond of deoxyribonucleoside 5'-monophosphates to yield deoxyribose 5-phosphate and a purine or pyrimidine base. The protein is Putative 2'-deoxynucleoside 5'-phosphate N-hydrolase 1 of Nematostella vectensis (Starlet sea anemone).